Here is a 1072-residue protein sequence, read N- to C-terminus: DNA-directed RNA polymerase subunit beta (1072 aa).

Belongs to the RNA polymerase beta chain family. In plastids the minimal PEP RNA polymerase catalytic core is composed of four subunits: alpha, beta, beta', and beta''. When a (nuclear-encoded) sigma factor is associated with the core the holoenzyme is formed, which can initiate transcription.

It localises to the plastid. It is found in the chloroplast. It catalyses the reaction RNA(n) + a ribonucleoside 5'-triphosphate = RNA(n+1) + diphosphate. In terms of biological role, DNA-dependent RNA polymerase catalyzes the transcription of DNA into RNA using the four ribonucleoside triphosphates as substrates. The chain is DNA-directed RNA polymerase subunit beta from Crucihimalaya wallichii (Rock-cress).